Here is a 281-residue protein sequence, read N- to C-terminus: LC-AMP precursor 3 (281 aa).

Residues methionine 1–alanine 19 form the signal peptide. Residues arginine 20–arginine 56 constitute a propeptide that is removed on maturation. A Leucine amide modification is found at leucine 74. Residues glycine 75 to arginine 89 constitute a propeptide that is removed on maturation. At serine 114 the chain carries Serine amide. The propeptide occupies glycine 115–arginine 129. Leucine amide is present on leucine 147. The propeptide occupies glycine 148–arginine 162. Leucine 180 is modified (leucine amide). Positions glycine 181–arginine 195 are excised as a propeptide. Leucine 213 carries the leucine amide modification. Residues glycine 214–arginine 228 constitute a propeptide that is removed on maturation. Leucine 246 bears the Leucine amide mark. The propeptide occupies glycine 247–arginine 261. Leucine 279 is modified (leucine amide).

Expressed by the venom gland.

It is found in the secreted. Antimicrobial peptide that acts by influencing bacterial cell membrane permeability at low concentrations and by directly disrupting structure-function at high concentrations. Shows activity against Gram-negative bacteria (S.typhimurium CGMCC 1.1174 (MIC=2.5 uM), E.coli CCTCC AB 2018675 (MIC=5 uM), S.dysenteriae CGMCC 1.1869 (MIC=2.5 uM), P.aeruginosa CGMCC 1.596 (MIC 5-10 uM), K.pneumoniae (MIC=10 uM), A.baumannii (MIC=5-10 uM)), and Gram-positive bacteria (S.aureus CMCC 26003 or MRSA ATCC 43300 (MIC=5 uM), and E.faecium (MIC=2.5-5 uM)). Inhibits biofilm formation of E.coli and S.aureus in a dose-dependent manner and disrupts established biofilms. Demonstrates minimal bacterial resistance, excellent stability, negligible mammalian cell toxicity, low hemolytic activity, and appropriate selectivity for both normal and tumor cells. When combined with traditional antibiotics, exhibits additive or synergistic therapeutic effects. In vivo, in a neutropenic mouse thigh infection model, exhibits a therapeutic effect in inhibiting bacterial proliferation. The polypeptide is LC-AMP precursor 3 (Lycosa coelestis (Wolf spider)).